The primary structure comprises 132 residues: uncharacterized protein (132 aa).

WD repeat units follow at residues 14–53 and 58–97; these read DLQD…LEIL and AHDD…LANV.

This is an uncharacterized protein from Acanthamoeba polyphaga (Amoeba).